The sequence spans 139 residues: Large ribosomal subunit protein bL17 (139 aa).

Positions 120–139 (ESAKGQDSGPVHVEGDEEAA) are disordered.

The protein belongs to the bacterial ribosomal protein bL17 family. Part of the 50S ribosomal subunit. Contacts protein L32.

The chain is Large ribosomal subunit protein bL17 from Parvibaculum lavamentivorans (strain DS-1 / DSM 13023 / NCIMB 13966).